A 635-amino-acid polypeptide reads, in one-letter code: Chaperone protein DnaK (635 aa).

A Phosphothreonine; by autocatalysis modification is found at Thr198. The segment at 598–635 is disordered; the sequence is YAKAQPGEEQAGGAPHEGEAKDEKVVDADFEEVKEDKK. Residues 613 to 624 show a composition bias toward basic and acidic residues; sequence HEGEAKDEKVVD. Positions 625–635 are enriched in acidic residues; sequence ADFEEVKEDKK.

It belongs to the heat shock protein 70 family.

In terms of biological role, acts as a chaperone. In Geotalea uraniireducens (strain Rf4) (Geobacter uraniireducens), this protein is Chaperone protein DnaK.